Consider the following 141-residue polypeptide: HTH-type transcriptional repressor NsrR (141 aa).

An HTH rrf2-type domain is found at 2-129; sequence QLTNFTDFGL…DQHTIQDMLT (128 aa). The H-T-H motif DNA-binding region spans 28 to 51; sequence ITVVTETFDVSRNHMVKIINKLGQ. [2Fe-2S] cluster is bound by residues Cys-91, Cys-96, and Cys-102.

[2Fe-2S] cluster serves as cofactor.

Its function is as follows. Nitric oxide-sensitive repressor of genes involved in protecting the cell against nitrosative stress. May require iron for activity. The chain is HTH-type transcriptional repressor NsrR from Aliivibrio salmonicida (strain LFI1238) (Vibrio salmonicida (strain LFI1238)).